Reading from the N-terminus, the 29-residue chain is Cytochrome b6-f complex subunit 8 (29 aa).

The chain crosses the membrane as a helical span at residues 3–23 (LITITWASVMVAFTFSLSLVV).

Belongs to the PetN family. The 4 large subunits of the cytochrome b6-f complex are cytochrome b6, subunit IV (17 kDa polypeptide, PetD), cytochrome f and the Rieske protein, while the 4 small subunits are PetG, PetL, PetM and PetN. The complex functions as a dimer.

Its subcellular location is the plastid. It localises to the chloroplast thylakoid membrane. In terms of biological role, component of the cytochrome b6-f complex, which mediates electron transfer between photosystem II (PSII) and photosystem I (PSI), cyclic electron flow around PSI, and state transitions. The polypeptide is Cytochrome b6-f complex subunit 8 (Chaetosphaeridium globosum (Charophycean green alga)).